The primary structure comprises 467 residues: Iroquois-class homeodomain protein irx-1 (467 aa).

The homeobox; TALE-type DNA-binding region spans 126–188 (DPGRPKNATR…NARRRLKKEN (63 aa)). Disordered regions lie at residues 198-307 (EDDN…PHNK), 319-342 (SPDG…PIQH), and 410-467 (SLSS…LPSA). 2 stretches are compositionally biased toward acidic residues: residues 215–225 (EDDEEIDLESI) and 233–244 (NDGEQSNEEEDE). A compositionally biased stretch (basic and acidic residues) spans 245–262 (KLEHLRQGEKESFKKESE). Residues 415-431 (KTPERTSPKHSDRENLP) are compositionally biased toward basic and acidic residues. Over residues 447–460 (RENTLSQQEGTSRI) the composition is skewed to polar residues.

This sequence belongs to the TALE/IRO homeobox family. As to expression, expressed in the neural plate in overlapping patterns with other irx members, which all share an anterior border of expression. Also expressed in the mesoderm, placodes and notochord. Broadly expressed in the tailbud rhombencephalon (hindbrain). Outside the nervous system and at tailbud stages, expressed in the developing otic vesicle, branchial arches, prospective heart region and pronephros.

It is found in the nucleus. In terms of biological role, acts partially redundantly with other irx members in neural patterning. Required for formation of the posterior forebrain, midbrain, hindbrain, and to a lesser extent, spinal cord. Acts early in neural plate development to induce expression of some but not all proneural genes, and specify a neural precursor state. Also up-regulates repressors that prevent neuronal differentiation. Patterns the neuroectoderm in both the anterior/posterior and dorsal/ventral axes. Acts primarily as a transcriptional repressor during neural development, and binds to the bmp4 promoter to repress gene expression and thus mediate down-regulation of bmp4 by wnt signaling. Controls multiple processes through bmp4-repression including neural plate development, neural crest specification and Spemann organizer development. Involved in the specification of the preplacodal field at the anterior border of the neural plate. Regulates the genetic cascade of interactions that are necessary for positioning the isthmus organizer and the formation of the midbrain-hindbrain boundary. Required during at least two stages of pronephros kidney development; during neurula stages, maintains transcription of key renal genes to define the size and identity of the pronephric anlage, probably in part through regulation of bmp-signaling. Subsequently required for proper formation of the intermediate tubule segment of the pronephros. Acts principally as a transcriptional activator during pronephros development. The sequence is that of Iroquois-class homeodomain protein irx-1 from Xenopus tropicalis (Western clawed frog).